The primary structure comprises 83 residues: Phytosulfokines 4 (83 aa).

An N-terminal signal peptide occupies residues 1 to 28; sequence MAARTVAVAAALAVLLIFAASSATVAMA. The propeptide occupies 29 to 74; it reads GRPTPTTSLDEEAAQAAAQSEIGGGCKEGEGEEECLARRTLTAHTD. Sulfotyrosine is present on residues Tyr-75 and Tyr-77. A propeptide spanning residues 80–83 is cleaved from the precursor; it reads QHHN.

Belongs to the phytosulfokine family. Sulfation is important for activity and for the binding to a putative membrane receptor. In terms of processing, PSK-alpha is produced by endopeptidase digestion. PSK-beta is produced from PSK-alpha by exopeptidase digestion.

It localises to the secreted. In terms of biological role, promotes plant cell differentiation, organogenesis and somatic embryogenesis as well as cell proliferation. The polypeptide is Phytosulfokines 4 (PSK4) (Oryza sativa subsp. japonica (Rice)).